A 399-amino-acid chain; its full sequence is S-adenosylmethionine synthase (399 aa).

H15 lines the ATP pocket. Position 17 (D17) interacts with Mg(2+). E43 is a binding site for K(+). L-methionine contacts are provided by E56 and Q99. The segment at 99-109 (QSPDIARGVNR) is flexible loop. Residues 166-168 (DAK), 232-233 (RF), D241, 247-248 (RK), A264, and K268 contribute to the ATP site. D241 lines the L-methionine pocket. K272 is a binding site for L-methionine.

The protein belongs to the AdoMet synthase family. As to quaternary structure, homotetramer; dimer of dimers. Mg(2+) is required as a cofactor. Requires K(+) as cofactor.

The protein resides in the cytoplasm. The enzyme catalyses L-methionine + ATP + H2O = S-adenosyl-L-methionine + phosphate + diphosphate. The protein operates within amino-acid biosynthesis; S-adenosyl-L-methionine biosynthesis; S-adenosyl-L-methionine from L-methionine: step 1/1. Its function is as follows. Catalyzes the formation of S-adenosylmethionine (AdoMet) from methionine and ATP. The overall synthetic reaction is composed of two sequential steps, AdoMet formation and the subsequent tripolyphosphate hydrolysis which occurs prior to release of AdoMet from the enzyme. The chain is S-adenosylmethionine synthase from Nitrosospira multiformis (strain ATCC 25196 / NCIMB 11849 / C 71).